A 360-amino-acid chain; its full sequence is Peptide chain release factor 1 (360 aa).

Position 236 is an N5-methylglutamine (Gln236).

This sequence belongs to the prokaryotic/mitochondrial release factor family. In terms of processing, methylated by PrmC. Methylation increases the termination efficiency of RF1.

Its subcellular location is the cytoplasm. Functionally, peptide chain release factor 1 directs the termination of translation in response to the peptide chain termination codons UAG and UAA. In Methylococcus capsulatus (strain ATCC 33009 / NCIMB 11132 / Bath), this protein is Peptide chain release factor 1.